A 391-amino-acid polypeptide reads, in one-letter code: Alkanesulfonate monooxygenase (391 aa).

This sequence belongs to the SsuD family.

The enzyme catalyses an alkanesulfonate + FMNH2 + O2 = an aldehyde + FMN + sulfite + H2O + 2 H(+). Its function is as follows. Catalyzes the desulfonation of aliphatic sulfonates. The chain is Alkanesulfonate monooxygenase from Paracidovorax citrulli (strain AAC00-1) (Acidovorax citrulli).